The chain runs to 637 residues: Chaperone protein HtpG (637 aa).

The interval 1–345 (MSQQETHGFQ…SNDLPLNVSR (345 aa)) is a; substrate-binding. The segment at 346 to 562 (EILQDNHVTK…DGEMSTQMIK (217 aa)) is b. Residues 563 to 637 (LMQAAGQPVP…MNQMLLANMK (75 aa)) form a c region.

This sequence belongs to the heat shock protein 90 family. Homodimer.

It localises to the cytoplasm. Molecular chaperone. Has ATPase activity. The chain is Chaperone protein HtpG from Shewanella baltica (strain OS155 / ATCC BAA-1091).